A 255-amino-acid polypeptide reads, in one-letter code: uncharacterized protein (255 aa).

2 N-linked (GlcNAc...) asparagine; by host glycosylation sites follow: Asn16 and Asn58. A run of 2 helical transmembrane segments spans residues 72 to 92 and 104 to 124; these read LIYSNIKWLIVGITIIPTIYY and LWYIGTPLVFMNLFNTLSHIC.

The protein localises to the membrane. This is an uncharacterized protein from Acanthamoeba polyphaga (Amoeba).